A 1371-amino-acid polypeptide reads, in one-letter code: Probable serine/threonine-protein kinase DDB_G0293292 (1371 aa).

Protein kinase domains follow at residues 9–269 (NKIL…HPNT) and 1131–1371 (FKEV…QPTL). ATP-binding positions include 15–23 (IDDGNTKRK) and Lys39. The active-site Proton acceptor is the Asp143.

It belongs to the protein kinase superfamily. Ser/Thr protein kinase family.

The catalysed reaction is L-seryl-[protein] + ATP = O-phospho-L-seryl-[protein] + ADP + H(+). The enzyme catalyses L-threonyl-[protein] + ATP = O-phospho-L-threonyl-[protein] + ADP + H(+). This chain is Probable serine/threonine-protein kinase DDB_G0293292, found in Dictyostelium discoideum (Social amoeba).